Reading from the N-terminus, the 373-residue chain is D-alanine--D-alanine ligase (373 aa).

The ATP-grasp domain occupies 165 to 369; it reads KRLAREAGIP…FGDLVSALIA (205 aa). 192–247 contributes to the ATP binding site; sequence KERLGLPVFVKPARGGSSIGISKVDSWEEFDAAIDLAFSNDNKVIVEAMIHGAEVE. Residues aspartate 324, glutamate 336, and asparagine 338 each contribute to the Mg(2+) site.

Belongs to the D-alanine--D-alanine ligase family. Mg(2+) serves as cofactor. Requires Mn(2+) as cofactor.

The protein localises to the cytoplasm. The enzyme catalyses 2 D-alanine + ATP = D-alanyl-D-alanine + ADP + phosphate + H(+). Its pathway is cell wall biogenesis; peptidoglycan biosynthesis. Functionally, cell wall formation. This is D-alanine--D-alanine ligase from Corynebacterium jeikeium (strain K411).